The sequence spans 238 residues: Ribosomal RNA small subunit methyltransferase G (238 aa).

Residues Gly77, Phe82, 128 to 129 (AE), and Arg147 each bind S-adenosyl-L-methionine.

This sequence belongs to the methyltransferase superfamily. RNA methyltransferase RsmG family.

It localises to the cytoplasm. Specifically methylates the N7 position of guanine in position 535 of 16S rRNA. The sequence is that of Ribosomal RNA small subunit methyltransferase G from Geobacillus sp. (strain WCH70).